The sequence spans 214 residues: Anti-sigma-F factor NrsF (214 aa).

Residues 1–25 (MRTDDLIDALAADAGRGTEPAPPRR) are Cytoplasmic-facing. A helical membrane pass occupies residues 26–46 (LALVAGLGGVAALLLVLGWLQ). Over 47–53 (ARPDLGQ) the chain is Periplasmic. Residues 54–74 (AILGPMFWVKAIYTGLLGLAG) traverse the membrane as a helical segment. Over 75 to 90 (YLAVERLSRPGGSGRR) the chain is Cytoplasmic. A helical membrane pass occupies residues 91–111 (GWIIGAVVFGACAVAGIYQAI). Residues 112 to 134 (TSPDVQAALKLLHGYSWRSCSPR) are Periplasmic-facing. The helical transmembrane segment at 135 to 155 (ILVLGLPMLALGLWALRGMAP) threads the bilayer. Residues 156–158 (TRP) lie on the Cytoplasmic side of the membrane. The chain crosses the membrane as a helical span at residues 159–179 (GLAGFAMGLFSGGVVATLYGL). The Periplasmic segment spans residues 180 to 185 (HCPEHT). The helical transmembrane segment at 186-206 (FTFLALWYSLGVLALGLIGGW) threads the bilayer. The Cytoplasmic segment spans residues 207 to 214 (AGRWLLRW).

It belongs to the NrsF anti-sigma-F factor family.

The protein localises to the cell inner membrane. An anti-sigma factor for extracytoplasmic function (ECF) sigma factor sigma-F (SigF), which responds to chromate and cadmium. Overexpression leads to loss of response to dichromate. ECF sigma factors are held in an inactive form by a cognate anti-sigma factor. This is Anti-sigma-F factor NrsF from Caulobacter vibrioides (strain NA1000 / CB15N) (Caulobacter crescentus).